The following is a 759-amino-acid chain: DNA topoisomerase 3 (759 aa).

The Toprim domain occupies 3–147; the sequence is RALFVAEKND…RLDIFRARFS (145 aa). Residues 165-590 enclose the Topo IA-type catalytic domain; sequence DEKTVAAVDC…EQIGKYRAIF (426 aa). Catalysis depends on Tyr334, which acts as the O-(5'-phospho-DNA)-tyrosine intermediate. Positions 609–715 are disordered; it reads DKNNQAGGGP…KEQEEEEEVF (107 aa). Residues 614–639 are compositionally biased toward gly residues; that stretch reads AGGGPGGPGGGGGPPRGPGGGGGGGP. Over residues 640-649 the composition is skewed to pro residues; it reads TGPPAPPKPP. Zn(2+) is bound by residues Cys716, Cys718, Cys743, and Cys753. Residues 716-759 form a GRF-type zinc finger; it reads CQCPEPMRAVTKVVQKEGPNKGKKFYTCSLPYTSSEKCNFFKWA.

It belongs to the type IA topoisomerase family. As to quaternary structure, component of the BTR double Holliday Junction dissolution complex composed of at least him-6, top-3, rmh-1 and rmif-2, which is involved in double strand break repair in the germline. May interact with rmh-1.

The protein localises to the nucleus. The enzyme catalyses ATP-independent breakage of single-stranded DNA, followed by passage and rejoining.. Its function is as follows. Component of the BTR double Holliday Junction dissolution complex, which is involved in homologous recombination during meiotic double strand break in the germline. Releases the supercoiling and torsional tension of DNA introduced during the DNA replication and transcription by transiently cleaving and rejoining one strand of the DNA duplex. Introduces a single-strand break via transesterification at a target site in duplex DNA. The scissile phosphodiester is attacked by the catalytic tyrosine of the enzyme, resulting in the formation of a DNA-(5'-phosphotyrosyl)-enzyme intermediate and the expulsion of a 3'-OH DNA strand. The free DNA strand than undergoes passage around the unbroken strand thus removing DNA supercoils. Finally, in the religation step, the DNA 3'-OH attacks the covalent intermediate to expel the active-site tyrosine and restore the DNA phosphodiester backbone. The chain is DNA topoisomerase 3 from Caenorhabditis elegans.